Reading from the N-terminus, the 192-residue chain is tRNA (pseudouridine(54)-N(1))-methyltransferase (192 aa).

Leu-127 and Cys-181 together coordinate S-adenosyl-L-methionine.

This sequence belongs to the methyltransferase superfamily. TrmY family. As to quaternary structure, homodimer.

It is found in the cytoplasm. The enzyme catalyses pseudouridine(54) in tRNA + S-adenosyl-L-methionine = N(1)-methylpseudouridine(54) in tRNA + S-adenosyl-L-homocysteine + H(+). Specifically catalyzes the N1-methylation of pseudouridine at position 54 (Psi54) in tRNAs. The protein is tRNA (pseudouridine(54)-N(1))-methyltransferase of Methanocella arvoryzae (strain DSM 22066 / NBRC 105507 / MRE50).